Consider the following 749-residue polypeptide: Taperin (749 aa).

The tract at residues 144 to 348 (PAAPCRRGSP…IRPSSKPDME (205 aa)) is disordered. Composition is skewed to polar residues over residues 169–179 (SAATRTPTNRS), 230–239 (LQKTGSNSFT), and 250–266 (VNRS…SPTG). The residue at position 274 (Ser-274) is a Phosphoserine. The span at 323–335 (QRQWVSSATSAND) shows a compositional bias: polar residues. Residues 337 to 347 (FEIRPSSKPDM) are compositionally biased toward basic and acidic residues. Phosphoserine is present on residues Ser-401, Ser-457, and Ser-501. Disordered regions lie at residues 502–586 (EEEA…TTLE), 636–673 (FEYP…SEKP), and 730–749 (LTPA…ALYF). Polar residues-rich tracts occupy residues 534–544 (ELLNRGSNTFT) and 558–570 (HLSQ…QQGA). The span at 647 to 668 (EEAEEEEEEEGEEDGEEEEVGP) shows a compositional bias: acidic residues.

Belongs to the taperin family. As to quaternary structure, interacts with GRXCR2; the interaction restricts TPRN to the stereocilum basal region. Interacts with actin ACTB; the interaction may stabilize stereocilia. Interacts with CLIC5. Interacts with PTPRQ. TPRN, CLIC5 and PTPQR form concentric rings at the base of stereocilia and may form a complex. Interacts with phosphatase PPP1CA; the interaction results in inhibition of PPP1CA phosphatase activity. Interacts with DNA damage response proteins XRCC6/KU70, XRCC5/KU80, PARP1, TOP1 and TOP2A; these interactions recruit TPRN to sites of DNA damage where it may play a role in DNA repair. In terms of tissue distribution, in the organ of Corti, expressed in the inner ear hair cell stereocilia and the supporting cells (at protein level). Expressed in the sensory epithelia of the organ of Corti and vestibular end organs and, to a lesser extent, in Reisner's membrane and the spiral ligament (at protein level). At postnatal day 2, expression is detected in cochlea, liver, brain, kidney, heart and lung.

The protein localises to the cell projection. Its subcellular location is the stereocilium. The protein resides in the microvillus. It is found in the nucleus. It localises to the nucleoplasm. The protein localises to the cytoplasm. In terms of biological role, essential for hearing. Required for maintenance of stereocilia on both inner and outer hair cells. Necessary for the integrity of the stereociliary rootlet. May act as an actin cytoskeleton regulator involved in the regulation of actin dynamics at the pointed end in hair cells. Forms rings at the base of stereocilia and binds actin filaments in the stereocilia which may stabilize the stereocilia. Acts as a strong inhibitor of PPP1CA phosphatase activity. Recruited to sites of DNA damage and may play a role in DNA damage repair. This chain is Taperin (Tprn), found in Mus musculus (Mouse).